The chain runs to 129 residues: Small ribosomal subunit protein uS11 (129 aa).

It belongs to the universal ribosomal protein uS11 family. Part of the 30S ribosomal subunit. Interacts with proteins S7 and S18. Binds to IF-3.

Located on the platform of the 30S subunit, it bridges several disparate RNA helices of the 16S rRNA. Forms part of the Shine-Dalgarno cleft in the 70S ribosome. This chain is Small ribosomal subunit protein uS11, found in Salmonella newport (strain SL254).